The primary structure comprises 294 residues: Elongation factor Ts (294 aa).

The involved in Mg(2+) ion dislocation from EF-Tu stretch occupies residues 79–82; it reads TDFV.

This sequence belongs to the EF-Ts family.

The protein resides in the cytoplasm. Functionally, associates with the EF-Tu.GDP complex and induces the exchange of GDP to GTP. It remains bound to the aminoacyl-tRNA.EF-Tu.GTP complex up to the GTP hydrolysis stage on the ribosome. This Geobacillus kaustophilus (strain HTA426) protein is Elongation factor Ts (tsf).